We begin with the raw amino-acid sequence, 486 residues long: Adenosylhomocysteinase (486 aa).

The substrate site is built by Thr-63, Asp-147, and Glu-209. 210-212 lines the NAD(+) pocket; that stretch reads TTT. The substrate site is built by Lys-239 and Asp-243. NAD(+) is bound by residues Asn-244, 273–278, Glu-296, Asn-331, 352–354, and Asn-400; these read GYGDVG and IGH.

It belongs to the adenosylhomocysteinase family. It depends on NAD(+) as a cofactor.

It catalyses the reaction S-adenosyl-L-homocysteine + H2O = L-homocysteine + adenosine. It functions in the pathway amino-acid biosynthesis; L-homocysteine biosynthesis; L-homocysteine from S-adenosyl-L-homocysteine: step 1/1. Functionally, adenosylhomocysteine is a competitive inhibitor of S-adenosyl-L-methionine-dependent methyl transferase reactions; therefore adenosylhomocysteinase may play a key role in the control of methylations via regulation of the intracellular concentration of adenosylhomocysteine. The protein is Adenosylhomocysteinase of Trichomonas vaginalis.